We begin with the raw amino-acid sequence, 185 residues long: Ribosome-recycling factor (185 aa).

Positions 143–163 (EKEKLISEDDNKKGMDDIQKE) are disordered.

This sequence belongs to the RRF family.

Its subcellular location is the cytoplasm. In terms of biological role, responsible for the release of ribosomes from messenger RNA at the termination of protein biosynthesis. May increase the efficiency of translation by recycling ribosomes from one round of translation to another. In Syntrophomonas wolfei subsp. wolfei (strain DSM 2245B / Goettingen), this protein is Ribosome-recycling factor.